The following is a 33-amino-acid chain: MSDIN-like toxin proprotein 1 (33 aa).

A propeptide spanning residues M1 to P10 is cleaved from the precursor. Residues I11–P18 constitute a cross-link (cyclopeptide (Ile-Pro)). Residues C19–R33 constitute a propeptide that is removed on maturation.

The protein belongs to the MSDIN fungal toxin family. Processed by the macrocyclase-peptidase enzyme POPB to yield a toxic cyclic octapeptide. POPB first removes 10 residues from the N-terminus. Conformational trapping of the remaining peptide forces the enzyme to release this intermediate rather than proceed to macrocyclization. The enzyme rebinds the remaining peptide in a different conformation and catalyzes macrocyclization of the N-terminal 8 residues.

Its function is as follows. Probable toxin that belongs to the MSDIN-like toxin family responsible for a large number of food poisoning cases and deaths. This chain is MSDIN-like toxin proprotein 1, found in Amanita fuliginea (East Asian brown death cap).